Consider the following 311-residue polypeptide: tRNA-cytidine(32) 2-sulfurtransferase (311 aa).

Positions 47–52 match the PP-loop motif motif; it reads SGGKDS. Cys-122, Cys-125, and Cys-213 together coordinate [4Fe-4S] cluster.

The protein belongs to the TtcA family. In terms of assembly, homodimer. Mg(2+) serves as cofactor. The cofactor is [4Fe-4S] cluster.

It localises to the cytoplasm. The catalysed reaction is cytidine(32) in tRNA + S-sulfanyl-L-cysteinyl-[cysteine desulfurase] + AH2 + ATP = 2-thiocytidine(32) in tRNA + L-cysteinyl-[cysteine desulfurase] + A + AMP + diphosphate + H(+). It participates in tRNA modification. Catalyzes the ATP-dependent 2-thiolation of cytidine in position 32 of tRNA, to form 2-thiocytidine (s(2)C32). The sulfur atoms are provided by the cysteine/cysteine desulfurase (IscS) system. The sequence is that of tRNA-cytidine(32) 2-sulfurtransferase from Pectobacterium atrosepticum (strain SCRI 1043 / ATCC BAA-672) (Erwinia carotovora subsp. atroseptica).